A 533-amino-acid chain; its full sequence is MKLGSRHNQHSFAQIPSVHTTRSKFNRSFGTKDTFKFDDLTPIFIDEILPGDTINMNTKTFIRLATQVVPVMDRMMLDFYFFFVPCRLVWDNWEKFNGAQDNPSDSTDYLIPTITAPAGGFENMSIYDHFGIPTQVANLEINALPFRAYNLIYNDWFRDQNLIGKIAVPKGDGPDNHADYQLLKAAKPHDYFTSALPWPQKGMAVEMPIGNSAPITYVPNAGNGPYPHFNWVQTPGGPGNNGALSQVTFGGQKAISAAGNDPIGYDPQGTLIADLSSATAATINQLRQAMMMQSLLELDARGGTRYVEILKSHFNVISLDFRLQRPEYLSGGTIDLQQNPVPQTSSSTTDSPQGNLAAFSTASEFGNKIGFSKSFVEHGYVLGFIRARGQVTYQQGLHKMWSRQTRWDFFWPKFQELGEQAILNKEIYAQGNATDSEIFGYQERYGEYRFRPSEIKGQFRSNFAESLDVWHLAEYFTVKPSLNKTFIESNTPIERSLVVTRPDYPDLIGDFWFDYTHVRPMVTYGVPATFGRF.

The segment at 333-353 (TIDLQQNPVPQTSSSTTDSPQ) is disordered.

Belongs to the microviridae F protein family.

It localises to the virion. The protein localises to the host cytoplasm. In terms of biological role, assembles to form an icosahedral capsid with a T=1 symmetry. In Bdellovibrio bacteriovorus (Bacteriophage phiMH2K), this protein is Capsid protein VP1.